Here is a 287-residue protein sequence, read N- to C-terminus: Endolytic peptidoglycan transglycosylase RlpA (287 aa).

The first 25 residues, 1 to 25, serve as a signal peptide directing secretion; that stretch reads MKLKTGLNLTALLLFMISVAFPAQA. An SPOR domain is found at 209-284; sequence LKGTEFYCLK…ANNKPLIVYT (76 aa).

Belongs to the RlpA family.

In terms of biological role, lytic transglycosylase with a strong preference for naked glycan strands that lack stem peptides. This chain is Endolytic peptidoglycan transglycosylase RlpA, found in Haemophilus influenzae (strain ATCC 51907 / DSM 11121 / KW20 / Rd).